A 562-amino-acid polypeptide reads, in one-letter code: Phosphoglucomutase-1 (562 aa).

Residue methionine 1 is modified to N-acetylmethionine. Lysine 16 bears the N6-acetyllysine mark. Arginine 23 contributes to the alpha-D-glucose 1,6-bisphosphate binding site. At threonine 115 the chain carries Phosphothreonine. Serine 117 lines the alpha-D-glucose 1,6-bisphosphate pocket. Serine 117 functions as the Phosphoserine intermediate in the catalytic mechanism. Serine 117 contacts Mg(2+). Serine 117 and serine 134 each carry phosphoserine. Threonine 185 carries the phosphothreonine modification. Serine 213 carries the post-translational modification Phosphoserine. Positions 288, 290, and 292 each coordinate Mg(2+). The alpha-D-glucose 1,6-bisphosphate site is built by aspartate 292 and arginine 293. Position 349 is an N6-acetyllysine (lysine 349). Phosphotyrosine is present on tyrosine 353. Position 357 (threonine 357) interacts with alpha-D-glucose 1,6-bisphosphate. Serine 369 carries the phosphoserine modification. Glutamate 376, serine 378, and lysine 389 together coordinate alpha-D-glucose 1,6-bisphosphate. Phosphoserine is present on serine 378. At lysine 419 the chain carries N6-succinyllysine. Threonine 467 is subject to Phosphothreonine; by PAK1. Serine 477, serine 485, and serine 505 each carry phosphoserine. Residue threonine 507 is modified to Phosphothreonine. A phosphoserine mark is found at serine 509 and serine 541.

Belongs to the phosphohexose mutase family. As to quaternary structure, monomer. Mg(2+) serves as cofactor. Phosphorylation at Thr-467 by PAK1 significantly enhances enzymatic activity.

It is found in the cytoplasm. It catalyses the reaction alpha-D-glucose 1-phosphate = alpha-D-glucose 6-phosphate. The enzyme catalyses O-phospho-L-seryl-[protein] + alpha-D-glucose 1-phosphate = alpha-D-glucose 1,6-bisphosphate + L-seryl-[protein]. It carries out the reaction alpha-D-glucose 1,6-bisphosphate + L-seryl-[protein] = O-phospho-L-seryl-[protein] + alpha-D-glucose 6-phosphate. In terms of biological role, catalyzes the reversible isomerization of alpha-D-glucose 1-phosphate to alpha-D-glucose 6-phosphate. The mechanism proceeds via the intermediate compound alpha-D-glucose 1,6-bisphosphate. This enzyme participates in both the breakdown and synthesis of glucose. The polypeptide is Phosphoglucomutase-1 (PGM1) (Bos taurus (Bovine)).